The chain runs to 1101 residues: ATP-dependent DNA helicase mph1 (1101 aa).

4 disordered regions span residues 22–59 (PGTS…SPDR), 95–138 (LTQP…QYHD), 154–231 (FEEE…TNRP), and 250–270 (SSQR…PTHH). A compositionally biased stretch (polar residues) spans 24 to 48 (TSDTVESVQTNNRPAKQSDISISQG). The span at 170-190 (TPARTAAAPCAAPKGTAADVP) shows a compositional bias: low complexity. Over residues 191-202 (FDLDDIPDDAFD) the composition is skewed to acidic residues. Polar residues predominate over residues 209 to 228 (PPRSTSQATRGPPVQSQFRT). Positions 296–464 (IAQRGLFHNL…AIIDDLGIAK (169 aa)) constitute a Helicase ATP-binding domain. 309-316 (LPTGLGKT) is a binding site for ATP. Positions 412-415 (DEAH) match the DEAH box motif. One can recognise a Helicase C-terminal domain in the interval 634–808 (YLKQVVLNHF…GTRFTFHDDK (175 aa)). 2 disordered regions span residues 824 to 890 (RQID…PTPE) and 991 to 1067 (SRDP…QDAF). Over residues 842–854 (RRARPPKRPPKKF) the composition is skewed to basic residues.

The protein belongs to the DEAD box helicase family. DEAH subfamily. FANCM sub-subfamily. As to quaternary structure, interacts with the MHF histone-fold complex to form the FANCM-MHF complex.

It localises to the nucleus. It carries out the reaction ATP + H2O = ADP + phosphate + H(+). ATP-dependent DNA helicase involved in DNA damage repair by homologous recombination and in genome maintenance. Capable of unwinding D-loops. Plays a role in limiting crossover recombinants during mitotic DNA double-strand break (DSB) repair. Component of a FANCM-MHF complex which promotes gene conversion at blocked replication forks, probably by reversal of the stalled fork. The protein is ATP-dependent DNA helicase mph1 of Aspergillus fumigatus (strain CBS 144.89 / FGSC A1163 / CEA10) (Neosartorya fumigata).